The sequence spans 166 residues: PTS system glucose-specific EIIA component (166 aa).

The region spanning 34–138 (DPVFAQKMMG…SIISPIIITN (105 aa)) is the PTS EIIA type-1 domain. Zn(2+)-binding residues include H71 and H86. The active-site Tele-phosphohistidine intermediate; for EIIA activity is the H86. H86 is subject to Phosphohistidine; by HPr.

As to quaternary structure, heterodimer with glycerol kinase (glpk). Zn(2+) serves as cofactor.

The protein localises to the cytoplasm. The phosphoenolpyruvate-dependent sugar phosphotransferase system (sugar PTS), a major carbohydrate active transport system, catalyzes the phosphorylation of incoming sugar substrates concomitantly with their translocation across the cell membrane. The enzyme II complex composed of PtsG and Crr is involved in glucose transport. The protein is PTS system glucose-specific EIIA component (crr) of Staphylococcus epidermidis (strain ATCC 35984 / DSM 28319 / BCRC 17069 / CCUG 31568 / BM 3577 / RP62A).